The primary structure comprises 249 residues: Triosephosphate isomerase (249 aa).

Residue 9 to 11 coordinates substrate; sequence NWK. His-94 (electrophile) is an active-site residue. The active-site Proton acceptor is Glu-166. Residues Gly-172 and 232-233 each bind substrate; that span reads GG.

This sequence belongs to the triosephosphate isomerase family. As to quaternary structure, homodimer.

It localises to the cytoplasm. It carries out the reaction D-glyceraldehyde 3-phosphate = dihydroxyacetone phosphate. It participates in carbohydrate biosynthesis; gluconeogenesis. It functions in the pathway carbohydrate degradation; glycolysis; D-glyceraldehyde 3-phosphate from glycerone phosphate: step 1/1. Functionally, involved in the gluconeogenesis. Catalyzes stereospecifically the conversion of dihydroxyacetone phosphate (DHAP) to D-glyceraldehyde-3-phosphate (G3P). The polypeptide is Triosephosphate isomerase (Xylella fastidiosa (strain M12)).